The sequence spans 292 residues: Mycothiol acetyltransferase (292 aa).

N-acetyltransferase domains lie at 13-168 (ALDR…KWLQ) and 159-292 (KSVA…VYEK). Glutamate 40 contacts 1D-myo-inositol 2-(L-cysteinylamino)-2-deoxy-alpha-D-glucopyranoside. An acetyl-CoA-binding site is contributed by 77-79 (LAV). Glutamate 179, lysine 218, and glutamate 226 together coordinate 1D-myo-inositol 2-(L-cysteinylamino)-2-deoxy-alpha-D-glucopyranoside. Acetyl-CoA contacts are provided by residues 230–232 (VGL) and 237–243 (RGRGLGD). Tyrosine 264 is a 1D-myo-inositol 2-(L-cysteinylamino)-2-deoxy-alpha-D-glucopyranoside binding site.

The protein belongs to the acetyltransferase family. MshD subfamily. Monomer.

The enzyme catalyses 1D-myo-inositol 2-(L-cysteinylamino)-2-deoxy-alpha-D-glucopyranoside + acetyl-CoA = mycothiol + CoA + H(+). Functionally, catalyzes the transfer of acetyl from acetyl-CoA to desacetylmycothiol (Cys-GlcN-Ins) to form mycothiol. This is Mycothiol acetyltransferase from Corynebacterium glutamicum (strain ATCC 13032 / DSM 20300 / JCM 1318 / BCRC 11384 / CCUG 27702 / LMG 3730 / NBRC 12168 / NCIMB 10025 / NRRL B-2784 / 534).